A 235-amino-acid chain; its full sequence is Probable RNA 2'-phosphotransferase (235 aa).

This sequence belongs to the KptA/TPT1 family.

Functionally, removes the 2'-phosphate from RNA via an intermediate in which the phosphate is ADP-ribosylated by NAD followed by a presumed transesterification to release the RNA and generate ADP-ribose 1''-2''-cyclic phosphate (APPR&gt;P). May function as an ADP-ribosylase. This Thermoplasma volcanium (strain ATCC 51530 / DSM 4299 / JCM 9571 / NBRC 15438 / GSS1) protein is Probable RNA 2'-phosphotransferase.